We begin with the raw amino-acid sequence, 251 residues long: Triosephosphate isomerase (251 aa).

Asn-9–Lys-11 contacts substrate. His-96 functions as the Electrophile in the catalytic mechanism. The active-site Proton acceptor is Glu-168. Substrate contacts are provided by residues Gly-174, Ser-214, and Gly-235–Gly-236.

Belongs to the triosephosphate isomerase family. Homodimer.

The protein localises to the cytoplasm. It catalyses the reaction D-glyceraldehyde 3-phosphate = dihydroxyacetone phosphate. Its pathway is carbohydrate biosynthesis; gluconeogenesis. It participates in carbohydrate degradation; glycolysis; D-glyceraldehyde 3-phosphate from glycerone phosphate: step 1/1. Functionally, involved in the gluconeogenesis. Catalyzes stereospecifically the conversion of dihydroxyacetone phosphate (DHAP) to D-glyceraldehyde-3-phosphate (G3P). This Porphyromonas gingivalis (strain ATCC BAA-308 / W83) protein is Triosephosphate isomerase.